A 93-amino-acid polypeptide reads, in one-letter code: Alpha-defensin 1 (93 aa).

The first 19 residues, 1 to 19, serve as a signal peptide directing secretion; sequence MKKLVLLFALVLLGFQVQA. A propeptide spanning residues 20–58 is cleaved from the precursor; the sequence is DSIQNTDEETKTEEQPGEEDQAVSVSFGDPEGTSLQEES. The disordered stretch occupies residues 24 to 54; that stretch reads NTDEETKTEEQPGEEDQAVSVSFGDPEGTSL. Disulfide bonds link C64–C92, C66–C81, and C71–C91.

It belongs to the alpha-defensin family. Paneth cells of the small bowel.

It is found in the secreted. Functionally, probably contributes to the antimicrobial barrier function of the small bowel mucosa. Has antibacterial activity against attenuated mutants of S.typhimurium. The sequence is that of Alpha-defensin 1 (Defa1) from Mus musculus (Mouse).